A 179-amino-acid polypeptide reads, in one-letter code: Large ribosomal subunit protein uL5 (179 aa).

The protein belongs to the universal ribosomal protein uL5 family. In terms of assembly, part of the 50S ribosomal subunit; part of the 5S rRNA/L5/L18/L25 subcomplex. Contacts the 5S rRNA and the P site tRNA. Forms a bridge to the 30S subunit in the 70S ribosome.

Its function is as follows. This is one of the proteins that bind and probably mediate the attachment of the 5S RNA into the large ribosomal subunit, where it forms part of the central protuberance. In the 70S ribosome it contacts protein S13 of the 30S subunit (bridge B1b), connecting the 2 subunits; this bridge is implicated in subunit movement. Contacts the P site tRNA; the 5S rRNA and some of its associated proteins might help stabilize positioning of ribosome-bound tRNAs. The protein is Large ribosomal subunit protein uL5 of Staphylococcus epidermidis (strain ATCC 35984 / DSM 28319 / BCRC 17069 / CCUG 31568 / BM 3577 / RP62A).